Reading from the N-terminus, the 138-residue chain is Small ribosomal subunit protein uS11c (138 aa).

Positions methionine 1–arginine 23 are disordered. Basic residues predominate over residues glycine 9–arginine 23.

The protein belongs to the universal ribosomal protein uS11 family. As to quaternary structure, part of the 30S ribosomal subunit.

The protein localises to the plastid. The protein resides in the chloroplast. This chain is Small ribosomal subunit protein uS11c, found in Aethionema grandiflorum (Persian stone-cress).